Reading from the N-terminus, the 146-residue chain is Catabolic 3-dehydroquinase (146 aa).

Tyr-24 acts as the Proton acceptor in catalysis. Substrate-binding residues include Asn-78, His-84, and Asp-91. His-104 (proton donor) is an active-site residue. Residues 105–106 (IT) and Arg-115 contribute to the substrate site.

This sequence belongs to the type-II 3-dehydroquinase family. As to quaternary structure, homododecamer. Adopts a ring-like structure, composed of an arrangement of two hexameric rings stacked on top of one another.

The enzyme catalyses 3-dehydroquinate = 3-dehydroshikimate + H2O. The protein operates within aromatic compound metabolism; 3,4-dihydroxybenzoate biosynthesis; 3,4-dihydroxybenzoate from 3-dehydroquinate: step 1/2. Functionally, is involved in the catabolism of quinate. Allows the utilization of quinate as carbon source via the beta-ketoadipate pathway. The sequence is that of Catabolic 3-dehydroquinase from Candida dubliniensis (strain CD36 / ATCC MYA-646 / CBS 7987 / NCPF 3949 / NRRL Y-17841) (Yeast).